Consider the following 108-residue polypeptide: UPF0060 membrane protein Nham_2004 (108 aa).

Helical transmembrane passes span 5-25 (AAYV…WAWL), 31-51 (VWWL…LTLV), 61-81 (AAYG…VEGL), and 88-108 (LTGA…PRQI).

This sequence belongs to the UPF0060 family.

Its subcellular location is the cell inner membrane. The polypeptide is UPF0060 membrane protein Nham_2004 (Nitrobacter hamburgensis (strain DSM 10229 / NCIMB 13809 / X14)).